The chain runs to 437 residues: Adenylosuccinate synthetase (437 aa).

GTP contacts are provided by residues 25 to 31 (GDEGKGK), 53 to 55 (GHT), and K62. D26 acts as the Proton acceptor in catalysis. Residues D26 and G53 each contribute to the Mg(2+) site. IMP-binding positions include 26-29 (DEGK) and 51-54 (NAGH). Catalysis depends on H54, which acts as the Proton donor. Residues T141, R155, N232, and T247 each coordinate IMP. T307 contributes to the GTP binding site. A substrate-binding site is contributed by 307–313 (TTTKRPR). Residue R311 participates in IMP binding. GTP-binding positions include R313, 339–341 (KLD), and 425–427 (GIG).

Belongs to the adenylosuccinate synthetase family. In terms of assembly, homodimer. It depends on Mg(2+) as a cofactor.

It is found in the cytoplasm. It catalyses the reaction IMP + L-aspartate + GTP = N(6)-(1,2-dicarboxyethyl)-AMP + GDP + phosphate + 2 H(+). It functions in the pathway purine metabolism; AMP biosynthesis via de novo pathway; AMP from IMP: step 1/2. In terms of biological role, plays an important role in the salvage pathway for purine nucleotide biosynthesis. Catalyzes the first committed step in the biosynthesis of AMP from IMP. The polypeptide is Adenylosuccinate synthetase (Plasmodium vivax (strain Salvador I)).